The chain runs to 339 residues: Serpentine receptor class delta-19 (339 aa).

7 consecutive transmembrane segments (helical) span residues 2–22 (IIFF…LNLL), 39–59 (ATLI…DLFI), 90–110 (VGLS…LISF), 130–150 (ITIM…TLFV), 187–207 (VYAV…IFVL), 242–262 (IIPM…SGLL), and 270–290 (SIFS…LYFV).

Belongs to the nematode receptor-like protein srd family.

Its subcellular location is the membrane. This Caenorhabditis elegans protein is Serpentine receptor class delta-19 (srd-19).